A 604-amino-acid chain; its full sequence is Glutamine--fructose-6-phosphate aminotransferase [isomerizing] (604 aa).

Residue C2 is the Nucleophile; for GATase activity of the active site. In terms of domain architecture, Glutamine amidotransferase type-2 spans C2–E216. 2 consecutive SIS domains span residues L281–A420 and V453–P594. K599 (for Fru-6P isomerization activity) is an active-site residue.

As to quaternary structure, homodimer.

It localises to the cytoplasm. It carries out the reaction D-fructose 6-phosphate + L-glutamine = D-glucosamine 6-phosphate + L-glutamate. Its function is as follows. Catalyzes the first step in hexosamine metabolism, converting fructose-6P into glucosamine-6P using glutamine as a nitrogen source. The polypeptide is Glutamine--fructose-6-phosphate aminotransferase [isomerizing] (Thermus thermophilus (strain ATCC 27634 / DSM 579 / HB8)).